A 101-amino-acid chain; its full sequence is Small ribosomal subunit protein uS14 (101 aa).

This sequence belongs to the universal ribosomal protein uS14 family. Part of the 30S ribosomal subunit. Contacts proteins S3 and S10.

Binds 16S rRNA, required for the assembly of 30S particles and may also be responsible for determining the conformation of the 16S rRNA at the A site. This is Small ribosomal subunit protein uS14 from Beijerinckia indica subsp. indica (strain ATCC 9039 / DSM 1715 / NCIMB 8712).